A 333-amino-acid polypeptide reads, in one-letter code: Mitochondrial glycine transporter (333 aa).

Solcar repeat units follow at residues 10–93 (SKST…IRQS), 125–209 (LSNT…GKKR), and 235–319 (HAAS…LIRR). 2 helical membrane-spanning segments follow: residues 16–41 (FAAG…TRVQ) and 68–94 (GAVP…RQSA). Positions 98 to 126 (SPLPSSSSSTTTSSSTTTSSSSSSLPKLS) are disordered. Helical transmembrane passes span 131 to 156 (LLAG…VRYE), 184 to 207 (GYGA…EQGK), 239 to 265 (INFA…KTRI), and 294 to 312 (GLAL…AWTV).

This sequence belongs to the mitochondrial carrier (TC 2.A.29) family. SLC25A38 subfamily.

The protein localises to the mitochondrion inner membrane. It carries out the reaction glycine(in) = glycine(out). Functionally, mitochondrial glycine transporter that imports glycine into the mitochondrial matrix. Plays an important role in providing glycine for the first enzymatic step in heme biosynthesis, the condensation of glycine with succinyl-CoA to produce 5-aminolevulinate (ALA) in the mitochondrial matrix. This is Mitochondrial glycine transporter from Chaetomium globosum (strain ATCC 6205 / CBS 148.51 / DSM 1962 / NBRC 6347 / NRRL 1970) (Soil fungus).